Here is a 593-residue protein sequence, read N- to C-terminus: Solute carrier family 40 member 3, chloroplastic (593 aa).

A disordered region spans residues 1 to 23; sequence MSMSKLLSPPPTSPPGPALSRLP. The N-terminal 51 residues, 1–51, are a transit peptide targeting the chloroplast; it reads MSMSKLLSPPPTSPPGPALSRLPCRRVAPPPVLPFPFPLRRLTSRRVFATS. Positions 8-17 are enriched in pro residues; it reads SPPPTSPPGP. A run of 11 helical transmembrane segments spans residues 181 to 201, 219 to 239, 253 to 273, 303 to 322, 323 to 343, 403 to 423, 431 to 451, 462 to 482, 493 to 513, 530 to 550, and 557 to 577; these read ILPV…AGPL, AAIQ…AFAV, FAVL…LGII, LLCE…KNNP, LTCI…LIFL, YVFV…TFLI, VIGA…FATA, AGAA…VVYL, LFAF…YSAI, IGAT…AVAV, and HFGA…GMYC.

This sequence belongs to the ferroportin (FP) (TC 2.A.100) family. SLC40A subfamily.

It localises to the membrane. The protein localises to the plastid. The protein resides in the chloroplast envelope. Functionally, may be involved in iron transport and iron homeostasis. In Oryza sativa subsp. japonica (Rice), this protein is Solute carrier family 40 member 3, chloroplastic.